Consider the following 149-residue polypeptide: Nucleoside diphosphate kinase (149 aa).

ATP contacts are provided by K9, F57, R85, T91, R102, and N112. Catalysis depends on H115, which acts as the Pros-phosphohistidine intermediate.

This sequence belongs to the NDK family. Mg(2+) is required as a cofactor.

It is found in the cytoplasm. The catalysed reaction is a 2'-deoxyribonucleoside 5'-diphosphate + ATP = a 2'-deoxyribonucleoside 5'-triphosphate + ADP. The enzyme catalyses a ribonucleoside 5'-diphosphate + ATP = a ribonucleoside 5'-triphosphate + ADP. Its function is as follows. Major role in the synthesis of nucleoside triphosphates other than ATP. The ATP gamma phosphate is transferred to the NDP beta phosphate via a ping-pong mechanism, using a phosphorylated active-site intermediate. In Methanospirillum hungatei JF-1 (strain ATCC 27890 / DSM 864 / NBRC 100397 / JF-1), this protein is Nucleoside diphosphate kinase.